Consider the following 413-residue polypeptide: ATP-dependent (S)-NAD(P)H-hydrate dehydratase (413 aa).

The region spanning N98–G402 is the YjeF C-terminal domain. Residues G199 and N252–A258 contribute to the (6S)-NADPHX site. ATP contacts are provided by residues K292–D296 and G311–G320. D321 contacts (6S)-NADPHX.

Belongs to the NnrD/CARKD family. Requires Mg(2+) as cofactor.

It catalyses the reaction (6S)-NADHX + ATP = ADP + phosphate + NADH + H(+). It carries out the reaction (6S)-NADPHX + ATP = ADP + phosphate + NADPH + H(+). Functionally, catalyzes the dehydration of the S-form of NAD(P)HX at the expense of ATP, which is converted to ADP. Together with NAD(P)HX epimerase, which catalyzes the epimerization of the S- and R-forms, the enzyme allows the repair of both epimers of NAD(P)HX, a damaged form of NAD(P)H that is a result of enzymatic or heat-dependent hydration. This chain is ATP-dependent (S)-NAD(P)H-hydrate dehydratase, found in Heterostelium pallidum (strain ATCC 26659 / Pp 5 / PN500) (Cellular slime mold).